Here is a 405-residue protein sequence, read N- to C-terminus: MTVDRQALGFGYGEHAAYASNPWASRGRLYPEASSPTRSDFQRDRDRIVHTTAFRRLKHKTQVFIAADGDHYRTRLTHTIEVAQIARALARALNLDEDLAEGVALVHDFGHTPFGHTGEDALDEVLKPYGGFDHNAQSLRIVTKLERRYAEFDGLNLTWESLEGLVKHNGPLTTADGQGLRGPVSQPILDYCALHDLELASFASLEAQVAAIADDIAYNTHDIDDGLRAGYLTFEMLEEIPFLARLMYEVRDRYPGLESSRFTHEIMRRQITAMVEDVIGVSQRGLADVRPASARDVRCAGRVIATFSDEMSETDRQIKNLLMTRIYRHPEVMRVREGAASIVTDLYRAFMDDPSLMKEHYWIDQIAGMEEPARARHVGDYLAGMTDTFAISVHRRLFDHTPDLR.

One can recognise an HD domain in the interval 75 to 219; it reads RLTHTIEVAQ…AAIADDIAYN (145 aa).

The protein belongs to the dGTPase family. Type 2 subfamily.

The chain is Deoxyguanosinetriphosphate triphosphohydrolase-like protein from Sinorhizobium medicae (strain WSM419) (Ensifer medicae).